The chain runs to 527 residues: Putative ABC transporter peptide-binding protein BOV_A0352 (527 aa).

Positions 1 to 23 (MRLRNFYSALALSAAVFAGPLYA) are cleaved as a signal peptide.

Belongs to the bacterial solute-binding protein 5 family. In terms of assembly, the complex is composed of two ATP-binding proteins (BOV_A0347 and BOV_A0348), two transmembrane proteins (BOV_A0350 and BOV_A0351) and a solute-binding protein (BOV_A0352).

It is found in the periplasm. In terms of biological role, probably part of an ABC transporter complex that could be involved in peptide import. In Brucella ovis (strain ATCC 25840 / 63/290 / NCTC 10512), this protein is Putative ABC transporter peptide-binding protein BOV_A0352.